A 247-amino-acid chain; its full sequence is Serine/threonine-protein phosphatase 2A activator (247 aa).

The protein belongs to the PTPA-type PPIase family.

It is found in the cytoplasm. The enzyme catalyses [protein]-peptidylproline (omega=180) = [protein]-peptidylproline (omega=0). PPIases accelerate the folding of proteins. It catalyzes the cis-trans isomerization of proline imidic peptide bonds in oligopeptides. Acts as a regulatory subunit for PP2A-like phosphatases modulating their activity or substrate specificity, probably by inducing a conformational change in the catalytic subunit, a direct target of the PPIase. Can reactivate inactive phosphatase PP2A-phosphatase methylesterase complexes (PP2Ai) in presence of ATP and Mg(2+) by dissociating the inactive form from the complex. The polypeptide is Serine/threonine-protein phosphatase 2A activator (Encephalitozoon cuniculi (strain GB-M1) (Microsporidian parasite)).